Reading from the N-terminus, the 83-residue chain is Gas vesicle protein G2 (83 aa).

Belongs to the gas vesicle GvpG family. In terms of assembly, gvpF to GvpM interact with each other in vitro, and may form multi-subunit complex(es).

The protein resides in the gas vesicle. Its function is as follows. Proteins GvpF to GvpM might be involved in nucleating gas vesicle formation. A minor component of the gas vesicle. Gas vesicles are hollow, gas filled proteinaceous nanostructures found in several microbial planktonic microorganisms. They allow positioning of halobacteria at the optimal depth for growth in the poorly aerated, shallow brine pools of their habitat. Functionally, expression of 2 c-vac DNA fragments containing 2 divergently transcribed regions (gvpE-gvpF-gvpG-gvpH-gvpI-gvpJ-gvpK-gvpL-gvpM and gvpA-gvpC-gvpN-gvpO) allows H.volcanii to produce gas vesicles. The protein is Gas vesicle protein G2 of Halobacterium salinarum (strain ATCC 700922 / JCM 11081 / NRC-1) (Halobacterium halobium).